A 229-amino-acid chain; its full sequence is Large ribosomal subunit protein uL1 (229 aa).

It belongs to the universal ribosomal protein uL1 family. As to quaternary structure, part of the 50S ribosomal subunit.

Functionally, binds directly to 23S rRNA. The L1 stalk is quite mobile in the ribosome, and is involved in E site tRNA release. Protein L1 is also a translational repressor protein, it controls the translation of the L11 operon by binding to its mRNA. In Streptococcus pyogenes serotype M3 (strain SSI-1), this protein is Large ribosomal subunit protein uL1.